Here is a 148-residue protein sequence, read N- to C-terminus: Probable glycine cleavage system H protein 2 (148 aa).

The Lipoyl-binding domain maps to 32–114 (TIVVGITDLA…YGKGWLVKMK (83 aa)). Lys-73 bears the N6-lipoyllysine mark.

It belongs to the GcvH family. As to quaternary structure, the glycine cleavage system is composed of four proteins: P, T, L and H. It depends on (R)-lipoate as a cofactor.

The glycine cleavage system catalyzes the degradation of glycine. The H protein shuttles the methylamine group of glycine from the P protein to the T protein. The sequence is that of Probable glycine cleavage system H protein 2 from Saccharolobus solfataricus (strain ATCC 35092 / DSM 1617 / JCM 11322 / P2) (Sulfolobus solfataricus).